Here is a 273-residue protein sequence, read N- to C-terminus: GATA-type zinc finger protein 1 (273 aa).

Disordered stretches follow at residues 99–143 (RDSK…ERVD) and 172–201 (SSRS…AGSE). The GATA-type zinc-finger motif lies at 208–232 (CASCRTQRTPLWRDAEDGTPLCNAC).

It localises to the nucleus. Functionally, transcriptional regulator that plays a key role in germ cell development. Determines the oogenic fate by activating key genes for the oogenic program and meiotic prophase entry. Acts downstream of bone morphogenetic protein (BMP) by regulating expression of genes required for the oogenic programs, which are repressed by Polycomb activities in sexually uncommitted germ cells. Regulates expression of STRA8, a central downstream effector for the meiotic program. Acts independently of retinoic acid (RA). In males, not required for germ-cell sex determination, but required to allow the spermatogonia to efficiently accomplish the meiotic prophase. This is GATA-type zinc finger protein 1 from Homo sapiens (Human).